The primary structure comprises 215 residues: Cytochrome b6 (215 aa).

The helical transmembrane segment at 32 to 52 (IFYCIGGITFTCFIMQVASGF) threads the bilayer. A heme c-binding site is contributed by C35. Heme b contacts are provided by H86 and H100. 3 helical membrane passes run 90 to 110 (ASMM…TGGF), 116 to 136 (LTWV…VTGY), and 186 to 206 (LHTF…FLMI). Heme b-binding residues include H187 and H202.

The protein belongs to the cytochrome b family. PetB subfamily. In terms of assembly, the 4 large subunits of the cytochrome b6-f complex are cytochrome b6, subunit IV (17 kDa polypeptide, PetD), cytochrome f and the Rieske protein, while the 4 small subunits are PetG, PetL, PetM and PetN. The complex functions as a dimer. It depends on heme b as a cofactor. Heme c is required as a cofactor.

It localises to the plastid. Its subcellular location is the chloroplast thylakoid membrane. Its function is as follows. Component of the cytochrome b6-f complex, which mediates electron transfer between photosystem II (PSII) and photosystem I (PSI), cyclic electron flow around PSI, and state transitions. The sequence is that of Cytochrome b6 from Mesostigma viride (Green alga).